The primary structure comprises 94 residues: Putative pterin-4-alpha-carbinolamine dehydratase (94 aa).

It belongs to the pterin-4-alpha-carbinolamine dehydratase family.

The enzyme catalyses (4aS,6R)-4a-hydroxy-L-erythro-5,6,7,8-tetrahydrobiopterin = (6R)-L-erythro-6,7-dihydrobiopterin + H2O. The chain is Putative pterin-4-alpha-carbinolamine dehydratase from Mycobacterium leprae (strain Br4923).